A 168-amino-acid chain; its full sequence is Protein OPG162 (168 aa).

Residues 1–14 (MKSLNRQTVSRFKK) are Intravirion-facing. Residues 15–37 (LSVPAAIMMILSTIISGIGTFLH) traverse the membrane as a helical segment. The Virion surface segment spans residues 38–168 (YKEELMPSAC…SVLCVKRFYK (131 aa)). Residues 54–163 (YDKHCYLDTN…CKSTQSVLCV (110 aa)) enclose the C-type lectin domain. 2 disulfides stabilise this stretch: Cys75–Cys162 and Cys141–Cys154. N-linked (GlcNAc...) asparagine; by host glycosylation occurs at Asn133.

It belongs to the orthopoxvirus OPG162 protein family. Interacts with protein OPG161. Interacts with protein OPG164. Interacts with protein OPG190.

The protein localises to the virion membrane. It is found in the host Golgi apparatus. Its function is as follows. Forms a complex with OPG162 and OPG190 to coordinate the incorporation of OPG164 into wrapped enveloped virion (EV) membranes and, subsequently, the production of actin tails. Therefore plays an essential role in efficient cell-to-cell spread of viral particles. This Variola virus (isolate Human/India/Ind3/1967) (VARV) protein is Protein OPG162 (OPG162).